Reading from the N-terminus, the 555-residue chain is Bifunctional epoxide hydrolase 2 (555 aa).

Residues 1-224 are phosphatase; that stretch reads MTLRAAVFDL…KVTGIQLLNT (224 aa). The Mg(2+) site is built by Asp9 and Asp11. N6-acetyllysine is present on Lys43. Lys55 is modified (N6-succinyllysine). Phosphate is bound at residue 123-124; sequence TN. Mg(2+) is bound at residue Asp185. 2 positions are modified to N6-acetyllysine: Lys191 and Lys215. The epoxide hydrolase stretch occupies residues 235 to 555; sequence SDMSHGYVTV…ARNPPVVSKM (321 aa). Residues 259–531 form the AB hydrolase-1 domain; sequence PAVCLCHGFP…CGHWTQMDKP (273 aa). Asp335 functions as the Nucleophile in the catalytic mechanism. Ser370 bears the Phosphoserine mark. Tyr383 provides a ligand contact to substrate. N6-succinyllysine is present on residues Lys421 and Lys455. Residue Tyr466 is the Proton donor of the active site. Cys522 is lipidated: S-(15-deoxy-Delta12,14-prostaglandin J2-9-yl)cysteine. His524 (proton acceptor) is an active-site residue. Positions 553 to 555 match the Microbody targeting signal motif; the sequence is SKM. Residue Lys554 is modified to N6-succinyllysine.

Belongs to the AB hydrolase superfamily. Epoxide hydrolase family. In terms of assembly, homodimer. It depends on Mg(2+) as a cofactor. In terms of processing, the N-terminus is blocked. Post-translationally, the covalent modification of cysteine by 15-deoxy-Delta12,14-prostaglandin-J2 is autocatalytic and reversible. It may occur as an alternative to other cysteine modifications, such as S-nitrosylation and S-palmitoylation.

It localises to the cytoplasm. The protein localises to the peroxisome. It carries out the reaction an epoxide + H2O = an ethanediol. The enzyme catalyses (9S,10S)-10-hydroxy-9-(phosphooxy)octadecanoate + H2O = (9S,10S)-9,10-dihydroxyoctadecanoate + phosphate. The catalysed reaction is 12-phosphooxy-(9Z)-octadecenoate + H2O = 12-hydroxy-(9Z)-octadecenoate + phosphate. It catalyses the reaction 12-phosphooxy-(9E)-octadecenoate + H2O = 12-hydroxy-(9E)-octadecenoate + phosphate. It carries out the reaction 12-(phosphooxy)octadecanoate + H2O = 12-hydroxyoctadecanoate + phosphate. The enzyme catalyses 8,9-epoxy-(5Z,11Z,14Z)-eicosatrienoate + H2O = 8,9-dihydroxy-(5Z,11Z,14Z)-eicosatrienoate. The catalysed reaction is 11,12-epoxy-(5Z,8Z,14Z)-eicosatrienoate + H2O = 11,12-dihydroxy-(5Z,8Z,14Z)-eicosatrienoate. It catalyses the reaction 14,15-epoxy-(5Z,8Z,11Z)-eicosatrienoate + H2O = 14,15-dihydroxy-(5Z,8Z,11Z)-eicosatrienoate. It carries out the reaction 9,10-epoxy-(12Z)-octadecenoate + H2O = 9,10-dihydroxy-(12Z)-octadecenoate. The enzyme catalyses 8-hydroxy-(11S,12S)-epoxy-(5Z,9E,14Z)-eicosatrienoate + H2O = (8,11R,12S)-trihydroxy-(5Z,9E,14Z)-eicosatrienoate. The catalysed reaction is 10-hydroxy-(11S,12S)-epoxy- (5Z,8Z,14Z)-eicosatrienoate + H2O = (10,11S,12R)-trihydroxy-(5Z,8Z,14Z)-eicosatrienoate. It catalyses the reaction 1-tetradecanoyl-sn-glycerol 3-phosphate + H2O = 1-tetradecanoyl-sn-glycerol + phosphate. It carries out the reaction 1-octadecanoyl-sn-glycero-3-phosphate + H2O = 1-octadecanoyl-sn-glycerol + phosphate. The enzyme catalyses 1-(5Z,8Z,11Z,14Z-eicosatetraenoyl)-sn-glycero-3-phosphate + H2O = 1-(5Z,8Z,11Z,14Z-eicosatetraenoyl)-sn-glycerol + phosphate. The catalysed reaction is 1-hexadecanoyl-sn-glycero-3-phosphate + H2O = 1-hexadecanoyl-sn-glycerol + phosphate. It catalyses the reaction 1-(9Z-octadecenoyl)-sn-glycero-3-phosphate + H2O = 1-(9Z-octadecenoyl)-sn-glycerol + phosphate. It carries out the reaction (8S,9R)-epoxy-(5Z,11Z,14Z)-eicosatrienoate + H2O = (8S,9S)-dihydroxy-(5Z,11Z,14Z)-eicosatrienoate. The enzyme catalyses (11S,12R)-epoxy-(5Z,8Z,14Z)-eicosatrienoate + H2O = (11R,12R)-dihydroxy-(5Z,8Z,14Z)-eicosatrienoate. The catalysed reaction is (11S,12R)-epoxy-(5Z,8Z,14Z)-eicosatrienoate + H2O = (11S,12S)-dihydroxy-(5Z,8Z,14Z)-eicosatrienoate. It catalyses the reaction (14S,15R)-epoxy-(5Z,8Z,11Z)-eicosatrienoate + H2O = (14R,15R)-dihydroxy-(5Z,8Z,11Z)-eicosatrienoate. It carries out the reaction (14S,15R)-epoxy-(5Z,8Z,11Z)-eicosatrienoate + H2O = (14S,15S)-dihydroxy-(5Z,8Z,11Z)-eicosatrienoate. The enzyme catalyses (11R,12S)-epoxy-(5Z,8Z,14Z)-eicosatrienoate + H2O = (11S,12S)-dihydroxy-(5Z,8Z,14Z)-eicosatrienoate. The catalysed reaction is (11R,12S)-epoxy-(5Z,8Z,14Z)-eicosatrienoate + H2O = (11R,12R)-dihydroxy-(5Z,8Z,14Z)-eicosatrienoate. It catalyses the reaction (8S,9R)-epoxy-(5Z,11Z,14Z)-eicosatrienoate + H2O = (8R,9R)-dihydroxy-(5Z,11Z,14Z)-eicosatrienoate. It carries out the reaction (14R,15S)-epoxy-(5Z,8Z,11Z)-eicosatrienoate + H2O = (14R,15R)-dihydroxy-(5Z,8Z,11Z)-eicosatrienoate. Its activity is regulated as follows. Inhibited by 1-(1-acetylpiperidin-4-yl)-3-(4-(trifl uoromethoxy)phenyl)urea (TPAU), 1-cyclohexyl-3-dodecylurea (CDU), 12-(3-adamantan-1-yl-ureido)-dodecanoic acid (AUDA), 1-((3S, 5S, 7S)-adamantan-1-yl)-3-(5-(2-(2-ethoxyethoxy) ethoxy)pentyl)urea (AEPU), N-adamantyl-N[']-cyclohexyl urea (ACU), 4-(((1S, 4S)-4-(3-((3S, 5S, 7S)-adamantan-1-yl) ureido)cyclohexyl)oxy)benzoic acid (c-AUCB), 4-(((1R, 4R)-4-(3-((3S, 5S, 7S)-adamantan-1-yl)ureido)cyclohexyl)oxy)benzoic acid (t-AUCB), 4-(((1R, 4R)-4-(3-(4(trifluoromethoxy)phenyl)ureido)cyclohexyl)oxy)benzoic acid (t-TAUCB) and to a lesser extent by 8-(3-((3S, 5S, 7S)-adamantan-1-yl)ureido) octanoic acid (AUOA). Phosphatase activity is inhibited by dodecyl-phosphate, phospholipids such as phospho-lysophosphatidic acids and fatty acids such as palmitic acid and lauric acid. Bifunctional enzyme. The C-terminal domain has epoxide hydrolase activity and acts on epoxides (alkene oxides, oxiranes) and arene oxides. Plays a role in xenobiotic metabolism by degrading potentially toxic epoxides. Also determines steady-state levels of physiological mediators. Its function is as follows. Bifunctional enzyme. The N-terminal domain has lipid phosphatase activity, with the highest activity towards threo-9,10-phosphonooxy-hydroxy-octadecanoic acid, followed by erythro-9,10-phosphonooxy-hydroxy-octadecanoic acid, 12-phosphonooxy-octadec-9Z-enoic acid and 12-phosphonooxy-octadec-9E-enoic acid. Has phosphatase activity toward lyso-glycerophospholipids with also some lower activity toward lysolipids of sphingolipid and isoprenoid phosphates. The polypeptide is Bifunctional epoxide hydrolase 2 (Homo sapiens (Human)).